The sequence spans 247 residues: Sugar fermentation stimulation protein homolog (247 aa).

Belongs to the SfsA family.

This chain is Sugar fermentation stimulation protein homolog, found in Methanococcoides burtonii (strain DSM 6242 / NBRC 107633 / OCM 468 / ACE-M).